A 58-amino-acid polypeptide reads, in one-letter code: SPbeta prophage-derived uncharacterized protein YonT (58 aa).

A helical transmembrane segment spans residues 6-26; it reads GIVVAFLISLTVLTINSLTIV. Residues 35-58 are disordered; the sequence is GTSKKKKRIRKRLRPKRQRQRIRR. The segment covering 36–58 has biased composition (basic residues); the sequence is TSKKKKRIRKRLRPKRQRQRIRR.

The protein localises to the cell membrane. The chain is SPbeta prophage-derived uncharacterized protein YonT (yonT) from Bacillus subtilis (strain 168).